A 135-amino-acid chain; its full sequence is Small ribosomal subunit protein uS12 (135 aa).

A disordered region spans residues 1 to 24 (MPTINQLVRKGRHSKTTKSKSPAL). Residues 9 to 18 (RKGRHSKTTK) are compositionally biased toward basic residues. Aspartate 102 bears the 3-methylthioaspartic acid mark.

The protein belongs to the universal ribosomal protein uS12 family. As to quaternary structure, part of the 30S ribosomal subunit. Contacts proteins S8 and S17. May interact with IF1 in the 30S initiation complex.

In terms of biological role, with S4 and S5 plays an important role in translational accuracy. Functionally, interacts with and stabilizes bases of the 16S rRNA that are involved in tRNA selection in the A site and with the mRNA backbone. Located at the interface of the 30S and 50S subunits, it traverses the body of the 30S subunit contacting proteins on the other side and probably holding the rRNA structure together. The combined cluster of proteins S8, S12 and S17 appears to hold together the shoulder and platform of the 30S subunit. This Lactobacillus delbrueckii subsp. bulgaricus (strain ATCC 11842 / DSM 20081 / BCRC 10696 / JCM 1002 / NBRC 13953 / NCIMB 11778 / NCTC 12712 / WDCM 00102 / Lb 14) protein is Small ribosomal subunit protein uS12.